The chain runs to 171 residues: uncharacterized protein (171 aa).

2 helical membrane-spanning segments follow: residues 13 to 35 (VGAS…IATA) and 50 to 72 (ATVL…AYVV).

It localises to the cell membrane. This is an uncharacterized protein from Treponema pallidum (strain Nichols).